Reading from the N-terminus, the 314-residue chain is Testisin (314 aa).

Residues 1–19 (MGARGALLLALLLARAGLR) form the signal peptide. Residues 20 to 41 (KPESQEAAPLSGPCGRRVITSR) constitute a propeptide that is removed on maturation. Intrachain disulfides connect Cys-33–Cys-157 and Cys-67–Cys-83. The region spanning 42–286 (IVGGEDAELG…HFEWIQKLMA (245 aa)) is the Peptidase S1 domain. Catalysis depends on charge relay system residues His-82 and Asp-137. 2 N-linked (GlcNAc...) asparagine glycosylation sites follow: Asn-167 and Asn-200. 3 disulfide bridges follow: Cys-171-Cys-244, Cys-204-Cys-223, and Cys-234-Cys-262. Ser-238 functions as the Charge relay system in the catalytic mechanism. N-linked (GlcNAc...) asparagine glycosylation is present at Asn-273. The GPI-anchor amidated serine moiety is linked to residue Ser-288. Positions 289-314 (GMSQPDPSWPLLFFPLLWALPLLGPV) are cleaved as a propeptide — removed in mature form.

The protein belongs to the peptidase S1 family. Expressed predominantly in premeiotic testicular germ cells, mostly late pachytene and diplotene spermatocytes.

The protein localises to the cell membrane. Functionally, could regulate proteolytic events associated with testicular germ cell maturation. The sequence is that of Testisin (PRSS21) from Homo sapiens (Human).